The primary structure comprises 249 residues: O-methyltransferase adaD (249 aa).

Residues 1-15 show a composition bias toward low complexity; it reads MSSVTLTTTTTTTST. The tract at residues 1-26 is disordered; sequence MSSVTLTTTTTTTSTPPKPTPKDEPQ.

Belongs to the methyltransferase superfamily.

The catalysed reaction is 2-acetyl-3,4a,8,10,11,12a-hexahydroxy-1,4,4a,5,12,12a-hexahydrotetracene-1,12-dione + S-adenosyl-L-methionine = TAN-1612 + S-adenosyl-L-homocysteine + H(+). It functions in the pathway secondary metabolite biosynthesis. Its function is as follows. O-methyltransferase; part of the gene cluster that mediates the biosynthesis of the linear tetracyclic TAN-1612 neuropeptide Y receptor antagonist. The decaketide backbone of TAN-1612 is synthesized by the non-reducing polyketide synthase adaA via condensation of one acetyl-CoA starter unit with 9 malonyl-CoA units. The FAD-dependent monooxygenase adaC then performs hydroxylation at C2 while the polaketide chain is still attached to the NRPKS adaA. The alpha-hydroxylation step at C2 appears to be crucial for the following C18-C1 Claisen cyclization and release of the C9-hydroxyl version of TAN-1612 from the NRPKS adaA, two steps performed by the lactamase-like protein adaB. Finally, the O-methyltransferase adaD performs the C9 O-methylation to complete the biosynthesis of TAN-1612. The protein is O-methyltransferase adaD of Aspergillus niger.